Here is a 315-residue protein sequence, read N- to C-terminus: Thioredoxin reductase (315 aa).

34–41 (EGMKVGGQ) is an FAD binding site. Residues Cys-134 and Cys-137 are joined by a disulfide bond. An FAD-binding site is contributed by 282 to 291 (DIRVKSLRQV).

It belongs to the class-II pyridine nucleotide-disulfide oxidoreductase family. Homodimer. Requires FAD as cofactor.

It is found in the cytoplasm. It catalyses the reaction [thioredoxin]-dithiol + NADP(+) = [thioredoxin]-disulfide + NADPH + H(+). The polypeptide is Thioredoxin reductase (trxB) (Peptoclostridium litorale (Clostridium litorale)).